The following is a 664-amino-acid chain: Translation factor guf1, mitochondrial (664 aa).

Residues 1–43 (MRGCLQLARWLSAAPKGTAASLTRAPFGLANATRFFTNSAARA) constitute a mitochondrion transit peptide. The tr-type G domain occupies 66–246 (ERYRNFCIVA…TVVDKIPAPI (181 aa)). GTP-binding positions include 75-82 (AHVDHGKS), 139-143 (DTPGH), and 193-196 (NKVD).

This sequence belongs to the TRAFAC class translation factor GTPase superfamily. Classic translation factor GTPase family. LepA subfamily.

Its subcellular location is the mitochondrion inner membrane. It catalyses the reaction GTP + H2O = GDP + phosphate + H(+). Its function is as follows. Promotes mitochondrial protein synthesis. May act as a fidelity factor of the translation reaction, by catalyzing a one-codon backward translocation of tRNAs on improperly translocated ribosomes. Binds to mitochondrial ribosomes in a GTP-dependent manner. This chain is Translation factor guf1, mitochondrial (guf1), found in Aspergillus clavatus (strain ATCC 1007 / CBS 513.65 / DSM 816 / NCTC 3887 / NRRL 1 / QM 1276 / 107).